The sequence spans 340 residues: MAASHPYFNLPDFTQPSPPSTPASLPSKHHHRCGPSNATKGLFVALLGGGLSAGFVGPFSRMAYQTSQLPSLELLIFRCLFHLPIALLLKFRGDPLLGPPDVRVRAFLHAILNVLSIGCAYSAVQVVPAGNAVTVRKGSSTVCSALLALCLESQGLSGYAWCGLFGSTLGLIIIVGPGLGTLQEGTTGLYTALGYVLAFLGGLALSLGLQIYRSLHFPSCLPTVAFLFGLVGLMVSVPGLFVLQTPVLPQDTLSWSCVVAVGLLALVSFVCVSYAVTKAHPALVCAVLHSEVVVALMLQYYVLYETVAPSDIMGAGVVLGSIAIITAQNLSCDKEGQTEE.

The tract at residues 11–33 is disordered; sequence PDFTQPSPPSTPASLPSKHHHRC. 9 helical membrane-spanning segments follow: residues 39–59, 69–89, 107–127, 160–180, 189–209, 223–243, 257–277, 283–303, and 307–327; these read TKGLFVALLGGGLSAGFVGPF, LPSLELLIFRCLFHLPIALLL, FLHAILNVLSIGCAYSAVQVV, AWCGLFGSTLGLIIIVGPGLG, LYTALGYVLAFLGGLALSLGL, TVAFLFGLVGLMVSVPGLFVL, CVVAVGLLALVSFVCVSYAVT, LVCAVLHSEVVVALMLQYYVL, and VAPSDIMGAGVVLGSIAIITA. An EamA 1 domain is found at 51 to 176; sequence LSAGFVGPFS…STLGLIIIVG (126 aa). One can recognise an EamA 2 domain in the interval 274 to 327; that stretch reads YAVTKAHPALVCAVLHSEVVVALMLQYYVLYETVAPSDIMGAGVVLGSIAIITA.

Belongs to the SLC35G solute transporter family.

The protein resides in the membrane. This is Solute carrier family 35 member G3 (Slc35g3) from Mus musculus (Mouse).